We begin with the raw amino-acid sequence, 69 residues long: Magnetosome protein MamI (69 aa).

Residues 1–2 (MP) are Cytoplasmic-facing. Residues 3-23 (SVIFGLLALAIGLLGLTAWWW) form a helical membrane-spanning segment. Topologically, residues 24-31 (SVTEFLRG) are lumenal. Residues 32-52 (AVPVALIIFGLVALAAGVQSV) form a helical membrane-spanning segment. Topologically, residues 53-69 (RVPPAGKRANSDPNIDG) are cytoplasmic.

It belongs to the magnetosome MamI protein family.

It localises to the magnetosome membrane. In terms of biological role, may be involved in an early stage of magnetosome nucleation. Not essential for formation of magnetosome membrane vesicles, it is probably functionally redundant with other proteins. May bind magnetite. One of 7 genes (mamLQBIEMO) able to induce magnetosome membrane biogenesis; coexpression of mamLQRBIEMO in a deletion of the 17 gene mamAB operon restores magnetosome vesicle formation but not magnetite biosynthesis. The sequence is that of Magnetosome protein MamI from Magnetospirillum gryphiswaldense (strain DSM 6361 / JCM 21280 / NBRC 15271 / MSR-1).